Here is a 453-residue protein sequence, read N- to C-terminus: Nuclear distribution protein PAC1 (453 aa).

In terms of domain architecture, LisH spans 19 to 51 (QKDELHKSILDYFKTNNLHESFATLMREANQEG). A coiled-coil region spans residues 69 to 96 (TSVIRLQKKIMEMESRISQLQEELSAAP). WD repeat units lie at residues 120 to 161 (GHRL…RTLK), 162 to 201 (GHTK…KNIK), 205 to 244 (GHDH…CTKT), 247 to 286 (GHAE…TKVE), 314 to 355 (LDPN…KTLT), 356 to 395 (GHDN…CTRT), and 413 to 452 (IEAP…KIWT).

The protein belongs to the WD repeat LIS1/nudF family. As to quaternary structure, self-associates. Interacts with NDL1 and dynein.

The protein localises to the cytoplasm. It localises to the cytoskeleton. The protein resides in the spindle pole. In terms of biological role, positively regulates the activity of the minus-end directed microtubule motor protein dynein. May enhance dynein-mediated microtubule sliding by targeting dynein to the microtubule plus end. Required for nuclear migration during vegetative growth as well as development. Required for localization of dynein to the mitotic spindle poles. Recruits additional proteins to the dynein complex at SPBs. Required for retrograde early endosome (EE) transport from the hyphal tip. The protein is Nuclear distribution protein PAC1 of Mycosarcoma maydis (Corn smut fungus).